A 78-amino-acid polypeptide reads, in one-letter code: Ferredoxin 7Fe (78 aa).

2 consecutive 4Fe-4S ferredoxin-type domains span residues 2 to 29 (AYVI…IHEG) and 31 to 60 (DQYY…HEDF). Residues C9 and C17 each coordinate [3Fe-4S] cluster. The [4Fe-4S] cluster site is built by C21, C40, C43, and C46. Residue C50 participates in [3Fe-4S] cluster binding.

As to quaternary structure, monomer. [4Fe-4S] cluster serves as cofactor. Requires [3Fe-4S] cluster as cofactor.

The polypeptide is Ferredoxin 7Fe (fdxA) (Hydrogenibacillus schlegelii (Bacillus schlegelii)).